We begin with the raw amino-acid sequence, 443 residues long: Probable D-serine dehydratase (443 aa).

Position 118 is an N6-(pyridoxal phosphate)lysine (Lys118).

This sequence belongs to the serine/threonine dehydratase family. DsdA subfamily. Pyridoxal 5'-phosphate is required as a cofactor.

The catalysed reaction is D-serine = pyruvate + NH4(+). The polypeptide is Probable D-serine dehydratase (Aeromonas hydrophila subsp. hydrophila (strain ATCC 7966 / DSM 30187 / BCRC 13018 / CCUG 14551 / JCM 1027 / KCTC 2358 / NCIMB 9240 / NCTC 8049)).